Consider the following 179-residue polypeptide: Deoxyuridine 5'-triphosphate nucleotidohydrolase (179 aa).

Substrate is bound by residues 90–92 (RSG), asparagine 103, 107–109 (TVD), and lysine 117.

It belongs to the dUTPase family. The cofactor is Mg(2+).

It carries out the reaction dUTP + H2O = dUMP + diphosphate + H(+). It participates in pyrimidine metabolism; dUMP biosynthesis; dUMP from dCTP (dUTP route): step 2/2. In terms of biological role, this enzyme is involved in nucleotide metabolism: it produces dUMP, the immediate precursor of thymidine nucleotides and it decreases the intracellular concentration of dUTP so that uracil cannot be incorporated into DNA. The sequence is that of Deoxyuridine 5'-triphosphate nucleotidohydrolase from Thermobifida fusca (strain YX).